Consider the following 436-residue polypeptide: GTPase Der (436 aa).

EngA-type G domains follow at residues 3 to 168 (PLIA…PESD) and 177 to 352 (IRLA…DNRA). Residues 9 to 16 (GRPNVGKS), 56 to 60 (DTGGY), 120 to 123 (NKVE), 183 to 190 (GRPNVGKS), 230 to 234 (DTAGL), and 295 to 298 (NKWD) contribute to the GTP site. Residues 353–436 (RKISTSALNR…VTISLRFLQK (84 aa)) form the KH-like domain.

It belongs to the TRAFAC class TrmE-Era-EngA-EngB-Septin-like GTPase superfamily. EngA (Der) GTPase family. In terms of assembly, associates with the 50S ribosomal subunit.

Its function is as follows. GTPase that plays an essential role in the late steps of ribosome biogenesis. This chain is GTPase Der, found in Chlorobium phaeovibrioides (strain DSM 265 / 1930) (Prosthecochloris vibrioformis (strain DSM 265)).